The sequence spans 527 residues: Glutamate--cysteine ligase (527 aa).

The protein belongs to the glutamate--cysteine ligase type 1 family. Type 1 subfamily.

It catalyses the reaction L-cysteine + L-glutamate + ATP = gamma-L-glutamyl-L-cysteine + ADP + phosphate + H(+). The protein operates within sulfur metabolism; glutathione biosynthesis; glutathione from L-cysteine and L-glutamate: step 1/2. This Pseudomonas aeruginosa (strain ATCC 15692 / DSM 22644 / CIP 104116 / JCM 14847 / LMG 12228 / 1C / PRS 101 / PAO1) protein is Glutamate--cysteine ligase.